The sequence spans 567 residues: uncharacterized protein (567 aa).

The Lumenal portion of the chain corresponds to 1-31; sequence MLDTILINVFRRDGDDDDDDGQDPALQELYS. The helical transmembrane segment at 32–52 threads the bilayer; the sequence is SWALFILLVLLIGALLTSYYV. Topologically, residues 53-64 are cytoplasmic; sequence QSKKIRAIHETV. A helical transmembrane segment spans residues 65–85; sequence ISVFVGMVVGLIIRVSPGLII. Residues 86-87 lie on the Lumenal side of the membrane; that stretch reads QN. The helical transmembrane segment at 88-108 threads the bilayer; it reads MVSFHSTYFFNVLLPPIILNS. Over 109-128 the chain is Cytoplasmic; it reads GYELHQSNFFRNIGTILTFA. Residues 129–149 traverse the membrane as a helical segment; that stretch reads FAGTFISAVTLGVLVYIFSFL. Over 150-159 the chain is Lumenal; it reads NFENLSMTFV. Residues 160–180 form a helical membrane-spanning segment; sequence EALSMGATLSATDPVTVLAIF. Residues 181–188 lie on the Cytoplasmic side of the membrane; that stretch reads NSYKVDQK. Residues 189 to 209 traverse the membrane as a helical segment; the sequence is LYTIIFGESILNDAVAIVMFE. At 210–227 the chain is on the lumenal side; the sequence is TLQQFQGKTLHFFTLFSG. Residues 228 to 248 form a helical membrane-spanning segment; the sequence is IGIFIITFFISLLIGVSIGLI. Residues 249 to 277 are Cytoplasmic-facing; sequence TALLLKYSYLRRYPSIESCIILLMAYTSY. Residues 278–298 form a helical membrane-spanning segment; the sequence is FFSNGCHMSGVVSLLFCGITL. Over 299-315 the chain is Lumenal; sequence KHYAFFNMSYKAKLSTK. A helical transmembrane segment spans residues 316–338; it reads YVFRVLAQLSENFIFIYLGMSLF. The Cytoplasmic segment spans residues 339–347; the sequence is TQVDLVYKP. The chain crosses the membrane as a helical span at residues 348–366; that stretch reads IFILITTVAVTASRYMNVF. Residues 367–392 lie on the Lumenal side of the membrane; it reads PLSNLLNKFHRQRNGNLIDHIPYSYQ. A helical membrane pass occupies residues 393–413; the sequence is MMLFWAGLRGAVGVALAAGFE. At 414 to 424 the chain is on the cytoplasmic side; that stretch reads GENAQTLRATT. The helical transmembrane segment at 425–445 threads the bilayer; sequence LVVVVLTLIIFGGTTARMLEI. At 446-567 the chain is on the lumenal side; that stretch reads LHIETGVAAD…RDNLKNGTKK (122 aa). Phosphoserine is present on Ser515.

The protein belongs to the monovalent cation:proton antiporter 1 (CPA1) transporter (TC 2.A.36) family.

The protein localises to the golgi apparatus membrane. This is an uncharacterized protein from Schizosaccharomyces pombe (strain 972 / ATCC 24843) (Fission yeast).